Consider the following 436-residue polypeptide: Prenyltransferase nscD (436 aa).

It belongs to the tryptophan dimethylallyltransferase family.

It functions in the pathway secondary metabolite biosynthesis. In terms of biological role, prenyltransferase; part of the gene cluster that mediates the biosynthesis of neosartoricin B, a prenylated anthracenone that probably exhibits T-cell antiproliferative activity, suggestive of a physiological role as an immunosuppressive agent. The non-reducing polyketide synthase nscA probably synthesizes and cyclizes the decaketide backbone. The hydrolase nscB then mediates the product release through hydrolysis followed by spontaneous decarboxylation. The prenyltransferase nscD catalyzes the addition of the dimethylallyl group to the aromatic C5. The FAD-dependent monooxygenase nscC is then responsible for the stereospecific hydroxylation at C2. Neosartoricin B can be converted into two additional compounds neosartoricins C and D. Neosartoricin C is a spirocyclic compound that is cyclized through the attack of C3 hydroxyl on C14, followed by dehydration. On the other hand, neosartoricin D is a further cyclized compound in which attack of C2 on C14 in neosartoricin C results in the formation of the acetal-containing dioxabicyclo-octanone ring. Both of these compounds are novel and possibly represent related metabolites of the gene cluster. The protein is Prenyltransferase nscD of Trichophyton tonsurans (strain CBS 112818) (Scalp ringworm fungus).